Consider the following 1921-residue polypeptide: Histone transcription regulator 3 homolog (1921 aa).

Disordered stretches follow at residues 350–439 (IGEV…LEKQ), 1402–1466 (GEDA…ATPV), 1738–1769 (PGSA…KTRV), and 1799–1921 (KGPP…SAPE). 2 stretches are compositionally biased toward basic and acidic residues: residues 353 to 376 (VENK…KKEA) and 391 to 400 (TTVKTEDRDS). Residues 413–422 (GTTSSSQPPS) show a composition bias toward polar residues. Over residues 428 to 439 (RGADEPAELEKQ) the composition is skewed to basic and acidic residues. Residues 1402-1425 (GEDADMESGDDSDSDSEVGSDSET) show a composition bias toward acidic residues. Positions 1757 to 1769 (GKKEDGKKEKTRV) are enriched in basic and acidic residues. Positions 1806-1818 (SSNGSSSNSGTRS) are enriched in low complexity. Composition is skewed to basic and acidic residues over residues 1819–1836 (NSEE…KSTQ) and 1861–1890 (EADK…EKSA). The segment covering 1899-1910 (TPKSKSTGSNGV) has biased composition (polar residues).

The protein belongs to the HIR3 family.

It is found in the nucleus. Functionally, has a role in a nucleosome assembly pathway that is required for the integrity of heterochromatin and proper chromosome segregation. This Yarrowia lipolytica (strain CLIB 122 / E 150) (Yeast) protein is Histone transcription regulator 3 homolog (HIR3).